The following is a 209-amino-acid chain: dTTP/UTP pyrophosphatase (209 aa).

The Proton acceptor role is filled by Asp88.

This sequence belongs to the Maf family. YhdE subfamily. A divalent metal cation serves as cofactor.

The protein resides in the cytoplasm. The enzyme catalyses dTTP + H2O = dTMP + diphosphate + H(+). It catalyses the reaction UTP + H2O = UMP + diphosphate + H(+). In terms of biological role, nucleoside triphosphate pyrophosphatase that hydrolyzes dTTP and UTP. May have a dual role in cell division arrest and in preventing the incorporation of modified nucleotides into cellular nucleic acids. The chain is dTTP/UTP pyrophosphatase from Burkholderia mallei (strain ATCC 23344).